The primary structure comprises 78 residues: Translation initiation factor IF-1 (78 aa).

The S1-like domain occupies 1–72; that stretch reads MAKEAEMEFE…TRGRITYRKI (72 aa).

The protein belongs to the IF-1 family. Component of the 30S ribosomal translation pre-initiation complex which assembles on the 30S ribosome in the order IF-2 and IF-3, IF-1 and N-formylmethionyl-tRNA(fMet); mRNA recruitment can occur at any time during PIC assembly.

It localises to the cytoplasm. Its function is as follows. One of the essential components for the initiation of protein synthesis. Stabilizes the binding of IF-2 and IF-3 on the 30S subunit to which N-formylmethionyl-tRNA(fMet) subsequently binds. Helps modulate mRNA selection, yielding the 30S pre-initiation complex (PIC). Upon addition of the 50S ribosomal subunit IF-1, IF-2 and IF-3 are released leaving the mature 70S translation initiation complex. The protein is Translation initiation factor IF-1 of Mesoplasma florum (strain ATCC 33453 / NBRC 100688 / NCTC 11704 / L1) (Acholeplasma florum).